A 449-amino-acid polypeptide reads, in one-letter code: UDP-N-acetylmuramate--L-alanine ligase (449 aa).

121-127 (GAHGKSS) contributes to the ATP binding site.

Belongs to the MurCDEF family.

It localises to the cytoplasm. It carries out the reaction UDP-N-acetyl-alpha-D-muramate + L-alanine + ATP = UDP-N-acetyl-alpha-D-muramoyl-L-alanine + ADP + phosphate + H(+). It participates in cell wall biogenesis; peptidoglycan biosynthesis. Cell wall formation. The protein is UDP-N-acetylmuramate--L-alanine ligase of Helicobacter pylori (strain P12).